Consider the following 367-residue polypeptide: GDSL esterase/lipase At4g28780 (367 aa).

The N-terminal stretch at 1 to 28 (MSTFLLTWIIMTVALSVTLFLMPQQTNA) is a signal peptide. The active-site Nucleophile is the Ser38. A glycan (N-linked (GlcNAc...) asparagine) is linked at Asn119. Active-site residues include Asp328 and His331. Asn356 carries N-linked (GlcNAc...) asparagine glycosylation.

This sequence belongs to the 'GDSL' lipolytic enzyme family.

It is found in the secreted. The chain is GDSL esterase/lipase At4g28780 from Arabidopsis thaliana (Mouse-ear cress).